A 391-amino-acid chain; its full sequence is Terminal nucleotidyltransferase 5C (391 aa).

It belongs to the TENT family. In terms of assembly, interacts with BCCIP and PABPC1; the interaction has no effect on TENT5C poly(A) polymerase function. Interacts with PLK4; this interaction leads to the TENT5C recruitment into the centrosome.

The protein resides in the nucleus. The protein localises to the cytoplasm. Its subcellular location is the cytoskeleton. It localises to the microtubule organizing center. It is found in the centrosome. It carries out the reaction RNA(n) + ATP = RNA(n)-3'-adenine ribonucleotide + diphosphate. Catalyzes the transfer of one adenosine molecule from an ATP to an mRNA poly(A) tail bearing a 3'-OH terminal group and enhances mRNA stability and gene expression. Can also elongate RNA oligos ending with uridine molecule, provided that the sequence is adenosine-rich. Mainly targets mRNAs encoding endoplasmic reticulum-targeted protein. In terms of biological role, (Microbial infection) Seems to enhance replication of some viruses, including yellow fever virus, in response to type I interferon. The sequence is that of Terminal nucleotidyltransferase 5C from Homo sapiens (Human).